We begin with the raw amino-acid sequence, 318 residues long: Formimidoylglutamase (318 aa).

Mn(2+) is bound by residues histidine 130, aspartate 155, histidine 157, aspartate 159, aspartate 246, and aspartate 248.

Belongs to the arginase family. Mn(2+) serves as cofactor.

It carries out the reaction N-formimidoyl-L-glutamate + H2O = formamide + L-glutamate. It functions in the pathway amino-acid degradation; L-histidine degradation into L-glutamate; L-glutamate from N-formimidoyl-L-glutamate (hydrolase route): step 1/1. Its function is as follows. Catalyzes the conversion of N-formimidoyl-L-glutamate to L-glutamate and formamide. This chain is Formimidoylglutamase, found in Photorhabdus laumondii subsp. laumondii (strain DSM 15139 / CIP 105565 / TT01) (Photorhabdus luminescens subsp. laumondii).